We begin with the raw amino-acid sequence, 223 residues long: Phosphoribosylformylglycinamidine synthase subunit PurQ (223 aa).

In terms of domain architecture, Glutamine amidotransferase type-1 spans 3–223 (FAVLVFPGSN…MVKSWREQHV (221 aa)). The active-site Nucleophile is the Cys-85. Residues His-193 and Glu-195 contribute to the active site.

Part of the FGAM synthase complex composed of 1 PurL, 1 PurQ and 2 PurS subunits.

It is found in the cytoplasm. The enzyme catalyses N(2)-formyl-N(1)-(5-phospho-beta-D-ribosyl)glycinamide + L-glutamine + ATP + H2O = 2-formamido-N(1)-(5-O-phospho-beta-D-ribosyl)acetamidine + L-glutamate + ADP + phosphate + H(+). It catalyses the reaction L-glutamine + H2O = L-glutamate + NH4(+). Its pathway is purine metabolism; IMP biosynthesis via de novo pathway; 5-amino-1-(5-phospho-D-ribosyl)imidazole from N(2)-formyl-N(1)-(5-phospho-D-ribosyl)glycinamide: step 1/2. Part of the phosphoribosylformylglycinamidine synthase complex involved in the purines biosynthetic pathway. Catalyzes the ATP-dependent conversion of formylglycinamide ribonucleotide (FGAR) and glutamine to yield formylglycinamidine ribonucleotide (FGAM) and glutamate. The FGAM synthase complex is composed of three subunits. PurQ produces an ammonia molecule by converting glutamine to glutamate. PurL transfers the ammonia molecule to FGAR to form FGAM in an ATP-dependent manner. PurS interacts with PurQ and PurL and is thought to assist in the transfer of the ammonia molecule from PurQ to PurL. The chain is Phosphoribosylformylglycinamidine synthase subunit PurQ from Staphylococcus aureus (strain MSSA476).